A 165-amino-acid polypeptide reads, in one-letter code: Cyclic pyranopterin monophosphate synthase (165 aa).

Residues Leu78 to His80 and Met116 to Glu117 each bind substrate. Asp131 is a catalytic residue.

This sequence belongs to the MoaC family. Homohexamer; trimer of dimers.

The catalysed reaction is (8S)-3',8-cyclo-7,8-dihydroguanosine 5'-triphosphate = cyclic pyranopterin phosphate + diphosphate. It participates in cofactor biosynthesis; molybdopterin biosynthesis. Its function is as follows. Catalyzes the conversion of (8S)-3',8-cyclo-7,8-dihydroguanosine 5'-triphosphate to cyclic pyranopterin monophosphate (cPMP). The chain is Cyclic pyranopterin monophosphate synthase from Sinorhizobium fredii (strain NBRC 101917 / NGR234).